Consider the following 327-residue polypeptide: Elongation factor P--(R)-beta-lysine ligase (327 aa).

S80 to E82 is a binding site for substrate. ATP contacts are provided by residues R104–E106 and N113. Y122 is a substrate binding site. E246 to L247 is an ATP binding site. E253 is a binding site for substrate. G302 provides a ligand contact to ATP.

It belongs to the class-II aminoacyl-tRNA synthetase family. EpmA subfamily. Homodimer.

The enzyme catalyses D-beta-lysine + L-lysyl-[protein] + ATP = N(6)-((3R)-3,6-diaminohexanoyl)-L-lysyl-[protein] + AMP + diphosphate + H(+). With EpmB is involved in the beta-lysylation step of the post-translational modification of translation elongation factor P (EF-P). Catalyzes the ATP-dependent activation of (R)-beta-lysine produced by EpmB, forming a lysyl-adenylate, from which the beta-lysyl moiety is then transferred to the epsilon-amino group of a conserved specific lysine residue in EF-P. In Haemophilus ducreyi (strain 35000HP / ATCC 700724), this protein is Elongation factor P--(R)-beta-lysine ligase.